A 622-amino-acid polypeptide reads, in one-letter code: Peptidoglycan O-acetyltransferase OatA (622 aa).

11 helical membrane passes run 11 to 31, 39 to 59, 81 to 101, 143 to 163, 173 to 193, 212 to 232, 237 to 257, 267 to 287, 307 to 327, 334 to 354, and 387 to 407; these read YVPS…AYHL, GFIG…NILL, LIPA…FFHP, LWSL…LLVF, LLKI…ILYV, LLSG…PVVP, AVLN…TAFV, GGLL…SHPA, YGIY…LEIT, AILQ…FIET, and IAGV…VLSV. The disordered stretch occupies residues 412–467; that stretch reads EKQQTSVKTTTSTPDEKKDDKKEDKATKDKEADSNKASEQKETQKPDNKNKSAATP. Residues 413 to 424 are compositionally biased toward low complexity; the sequence is KQQTSVKTTTST. Basic and acidic residues predominate over residues 425–461; the sequence is PDEKKDDKKEDKATKDKEADSNKASEQKETQKPDNKN. Catalysis depends on residues S480, D600, and H603.

Belongs to the acyltransferase 3 family.

The protein resides in the cell membrane. The protein localises to the secreted. It is found in the cell wall. In terms of biological role, responsible for O-acetylation at the C6-hydroxyl group of N-acetylmuramyl residues, forming the corresponding N,6-O-diacetylmuramic acid of the peptidoglycan. O-acetylation of the peptidoglycan is the major determinant for lysozyme resistance. Critical for virulence and escape from innate immune response of the host. Involved at both early and later stages of listeriosis in the mouse model of infection. Required for successful host colonization and for intracellular survival of bacteria in macrophages of the infected host. Controls the production of inflammatory mediators in the liver of the infected host. Confers resistance to host antimicrobial molecules and to cell wall-targeting molecules such as beta-lactam antibiotics and bacteriocins. In Listeria monocytogenes serovar 1/2a (strain ATCC BAA-679 / EGD-e), this protein is Peptidoglycan O-acetyltransferase OatA.